The primary structure comprises 173 residues: Shikimate kinase (173 aa).

16-21 (GSGKTT) is an ATP binding site. Residue Thr20 coordinates Mg(2+). Positions 38, 62, and 83 each coordinate substrate. Arg120 provides a ligand contact to ATP. Position 139 (Arg139) interacts with substrate. Arg156 contacts ATP.

This sequence belongs to the shikimate kinase family. In terms of assembly, monomer. It depends on Mg(2+) as a cofactor.

The protein resides in the cytoplasm. The enzyme catalyses shikimate + ATP = 3-phosphoshikimate + ADP + H(+). The protein operates within metabolic intermediate biosynthesis; chorismate biosynthesis; chorismate from D-erythrose 4-phosphate and phosphoenolpyruvate: step 5/7. Its function is as follows. Catalyzes the specific phosphorylation of the 3-hydroxyl group of shikimic acid using ATP as a cosubstrate. In Corynebacterium diphtheriae (strain ATCC 700971 / NCTC 13129 / Biotype gravis), this protein is Shikimate kinase.